A 455-amino-acid polypeptide reads, in one-letter code: Ectonucleoside triphosphate diphosphohydrolase 6 (455 aa).

The Cytoplasmic portion of the chain corresponds to M1–M12. The chain crosses the membrane as a helical; Signal-anchor for type II membrane protein span at residues T13–I32. Residues K33 to L455 are Lumenal-facing. N192 carries N-linked (GlcNAc...) asparagine glycosylation. E196 acts as the Proton acceptor in catalysis. N-linked (GlcNAc...) asparagine glycosylation is present at N256. Intrachain disulfides connect C297-C327 and C387-C401.

Belongs to the GDA1/CD39 NTPase family. It depends on Ca(2+) as a cofactor. The cofactor is Mg(2+). In terms of processing, might be cleaved at the N-terminus, retained in an intracellular membrane compartment and in addition be released into the extracellular medium. N-glycosylated. Expressed in heart and brain.

It is found in the golgi apparatus membrane. The protein resides in the secreted. The protein localises to the cell membrane. It catalyses the reaction a ribonucleoside 5'-diphosphate + H2O = a ribonucleoside 5'-phosphate + phosphate + H(+). The enzyme catalyses IDP + H2O = IMP + phosphate + H(+). The catalysed reaction is GDP + H2O = GMP + phosphate + H(+). It carries out the reaction UDP + H2O = UMP + phosphate + H(+). In terms of biological role, catalyzes the hydrolysis of nucleoside triphosphates and diphosphates in a calcium- or magnesium-dependent manner. Has a strong preference for nucleoside diphosphates, preferentially hydrolyzes GDP, IDP, and UDP, with slower hydrolysis of CDP, ITP, GTP, CTP, ADP, and UTP and virtually no hydrolysis of ATP. The membrane bound form might support glycosylation reactions in the Golgi apparatus and, when released from cells, might catalyze the hydrolysis of extracellular nucleotides. The sequence is that of Ectonucleoside triphosphate diphosphohydrolase 6 (Entpd6) from Rattus norvegicus (Rat).